We begin with the raw amino-acid sequence, 217 residues long: MEHSAWHDLIKKELPEGYFAQINHFMNEVYAQGVIYPPRDKVFNAIQTTPLDKVKVVIIGQDPYHGPNQAQGLSFSVPDQVPAPPSLQNILKELADDIGQKQSHDLTSWAKQGVLLLNASLTVPEHQANAHANGIWEPFTDAVIKVVNQKETPVVFILWGGFARKKKALITNSIHHIIESPHPSPLSAHRGFFGSKPFSQTNHFLVAQGLEPIDWLK.

Asp62 serves as the catalytic Proton acceptor.

It belongs to the uracil-DNA glycosylase (UDG) superfamily. UNG family.

It is found in the cytoplasm. The enzyme catalyses Hydrolyzes single-stranded DNA or mismatched double-stranded DNA and polynucleotides, releasing free uracil.. Functionally, excises uracil residues from the DNA which can arise as a result of misincorporation of dUMP residues by DNA polymerase or due to deamination of cytosine. The chain is Uracil-DNA glycosylase from Streptococcus mutans serotype c (strain ATCC 700610 / UA159).